A 161-amino-acid polypeptide reads, in one-letter code: Lipoprotein signal peptidase (161 aa).

3 helical membrane-spanning segments follow: residues 9–29 (WLWL…LVVE), 64–84 (WQKY…ANVL), and 96–113 (MAYA…IDRA). Residues Asp-120 and Asp-138 contribute to the active site. Residues 133-153 (VFNIADVAIVMGAGLLILETF) form a helical membrane-spanning segment.

Belongs to the peptidase A8 family.

The protein resides in the cell inner membrane. It catalyses the reaction Release of signal peptides from bacterial membrane prolipoproteins. Hydrolyzes -Xaa-Yaa-Zaa-|-(S,diacylglyceryl)Cys-, in which Xaa is hydrophobic (preferably Leu), and Yaa (Ala or Ser) and Zaa (Gly or Ala) have small, neutral side chains.. It participates in protein modification; lipoprotein biosynthesis (signal peptide cleavage). This protein specifically catalyzes the removal of signal peptides from prolipoproteins. The polypeptide is Lipoprotein signal peptidase (Haemophilus ducreyi (strain 35000HP / ATCC 700724)).